A 266-amino-acid polypeptide reads, in one-letter code: Beta-lactamase OXA-19 (266 aa).

Residues 1–20 (MKTFAAYVITACLSSTALAS) form the signal peptide. Serine 67 acts as the Acyl-ester intermediate in catalysis. Lysine 70 bears the N6-carboxylysine mark. 205 to 207 (KTG) provides a ligand contact to substrate.

The protein belongs to the class-D beta-lactamase family.

It carries out the reaction a beta-lactam + H2O = a substituted beta-amino acid. This is Beta-lactamase OXA-19 (bla) from Pseudomonas aeruginosa.